Consider the following 430-residue polypeptide: DD-carboxypeptidase/endopeptidase Mpg (430 aa).

Positions 295, 299, and 375 each coordinate Zn(2+).

The protein belongs to the peptidase M23B family. Monomer. Zn(2+) serves as cofactor. Likely to be synthesized as a proenzyme. The cleavage of the N-terminal domain is probably required for the activation of the enzyme.

The protein resides in the cell outer membrane. With respect to regulation, peptidoglycan (PG) degradation activity is completely inhibited by zinc chelating EDTA and phenanthroline. In terms of biological role, has both endopeptidase and DD-carboxypeptidase activities. Degrades cell wall peptidoglycan (PG) to allow consummate expression of pili. Degrades N.gonorrhoeae and E.coli PG side chains in vitro. Required for proper piliation, which in turn is required for normal colony morphology, resistance to H(2)O(2) damage and defense against killing by human polymorphonuclear leukocytes (PMNs). Involved in type IV pilus biogenesis. Involved in resistance against non-oxidative killing by adherent CXCL8/IL8-primed human PMNs. Protects from killing by PMN-produced antimicrobial factors, which kill by a mechanism completely independent of reactive oxygen species (ROS) production of the PMNs. Provides protection against oxidative damage caused by peroxides H(2)O(2) and cumene hydroperoxide in vitro. This Neisseria gonorrhoeae (strain ATCC 700825 / FA 1090) protein is DD-carboxypeptidase/endopeptidase Mpg.